The sequence spans 206 residues: Small ribosomal subunit protein uS4 (206 aa).

Residues 18 to 46 form a disordered region; the sequence is NIWGRPKSPVNRREYGPGQHGQRRKGKIS. The region spanning 94 to 154 is the S4 RNA-binding domain; sequence RRLDAVVYRA…DRSKQMVALI (61 aa).

Belongs to the universal ribosomal protein uS4 family. In terms of assembly, part of the 30S ribosomal subunit. Contacts protein S5. The interaction surface between S4 and S5 is involved in control of translational fidelity.

One of the primary rRNA binding proteins, it binds directly to 16S rRNA where it nucleates assembly of the body of the 30S subunit. In terms of biological role, with S5 and S12 plays an important role in translational accuracy. This chain is Small ribosomal subunit protein uS4, found in Roseobacter denitrificans (strain ATCC 33942 / OCh 114) (Erythrobacter sp. (strain OCh 114)).